The following is an 833-amino-acid chain: V-type proton ATPase 116 kDa subunit a 4 (833 aa).

Residues 1–390 (MASVFRSEEM…DAYGVGSYRE (390 aa)) lie on the Cytoplasmic side of the membrane. Residues 391 to 409 (INPAPYTIITFPFLFAVMF) form a helical membrane-spanning segment. Residues 410–411 (GD) are Vacuolar-facing. The helical transmembrane segment at 412–428 (CGHGMVMLMAALWMVLN) threads the bilayer. Residues 429–443 (ERHLLAQKSTNEMWN) lie on the Cytoplasmic side of the membrane. The helical transmembrane segment at 444–473 (IFFNGRYLILLMGIFSIYTGLIYNDCFSKS) threads the bilayer. Topologically, residues 474 to 538 (FNIFGSSWSV…ASNKLTFLNS (65 aa)) are vacuolar. The helical transmembrane segment at 539 to 558 (YKMKMSVILGIAHMIFGVIL) threads the bilayer. Over 559–576 (SLFNHIYFRRTLNIILQF) the chain is Cytoplasmic. Residues 577–597 (IPEMIFMLSLFGYLVFMIIFK) form a helical membrane-spanning segment. Topologically, residues 598 to 642 (WCRYDAHTSRKAPSILIHFIGMFLFDYDDSSNAPLYGHQQEVQTF) are vacuolar. The chain crosses the membrane as a helical span at residues 643 to 662 (FVIIALVSVPWMLLIKPFVL). Over 663-720 (RAKHQKSQLQSFTIHEDAVEGDHSGHSSKKTAGAHGMKDGHEEEFNFGDIFVHQAIHT) the chain is Cytoplasmic. The interval 681-700 (VEGDHSGHSSKKTAGAHGMK) is disordered. The chain crosses the membrane as a helical span at residues 721 to 745 (IEYCLGCISNTASYLRLWALSLAHA). Topologically, residues 746-766 (ELSEVLWTMVMSIGLRLQGWA) are vacuolar. The helical transmembrane segment at 767–805 (GLVGVFIIFAVFAVLTVAILLVMEGLSAFLHALRLHWVE) threads the bilayer. The Cytoplasmic segment spans residues 806 to 833 (FQNKFYEGAGSKFSPFSFKHVLEGTAEE).

The protein belongs to the V-ATPase 116 kDa subunit family. In terms of assembly, V-ATPase is a heteromultimeric enzyme made up of two complexes: the ATP-hydrolytic V1 complex and the proton translocation V0 complex. The V1 complex consists of three catalytic AB heterodimers that form a heterohexamer, three peripheral stalks each consisting of EG heterodimers, one central rotor including subunits D and F, and the regulatory subunits C and H. The proton translocation complex V0 consists of the proton transport subunit a, a ring of proteolipid subunits c9c'', rotary subunit d, subunits e and f, and the accessory subunits ATP6AP1/Ac45 and ATP6AP2/PRR. Interacts with the V1 complex V-ATPase subunit A ATP6V1A. Interacts with the V0 complex V-ATPase subunit c ATP6V0C. As to expression, specifically expressed in kidney, but not in the heart, brain, spleen, lung, liver, muscle, or testis. Distribution within the kidney appears more widespread than that seen in man. High intensity staining at the surface of intercalated cells, with additional expression in the proximal tubule.

The protein localises to the apical cell membrane. It localises to the basolateral cell membrane. Functionally, subunit of the V0 complex of vacuolar(H+)-ATPase (V-ATPase), a multisubunit enzyme composed of a peripheral complex (V1) that hydrolyzes ATP and a membrane integral complex (V0) that translocates protons. V-ATPase is responsible for acidifying and maintaining the pH of intracellular compartments and in some cell types, is targeted to the plasma membrane, where it is responsible for acidifying the extracellular environment. Involved in normal vectorial acid transport into the urine by the kidney. The chain is V-type proton ATPase 116 kDa subunit a 4 (Atp6v0a4) from Mus musculus (Mouse).